A 149-amino-acid chain; its full sequence is UPF0178 protein Mmwyl1_2258 (149 aa).

This sequence belongs to the UPF0178 family.

In Marinomonas sp. (strain MWYL1), this protein is UPF0178 protein Mmwyl1_2258.